Consider the following 314-residue polypeptide: Aspartate carbamoyltransferase catalytic subunit (314 aa).

Residues Arg64 and Thr65 each contribute to the carbamoyl phosphate site. Residue Lys92 participates in L-aspartate binding. 3 residues coordinate carbamoyl phosphate: Arg114, His142, and Gln145. L-aspartate-binding residues include Arg175 and Arg230. Carbamoyl phosphate contacts are provided by Gly271 and Pro272.

Belongs to the aspartate/ornithine carbamoyltransferase superfamily. ATCase family. Heterododecamer (2C3:3R2) of six catalytic PyrB chains organized as two trimers (C3), and six regulatory PyrI chains organized as three dimers (R2).

The catalysed reaction is carbamoyl phosphate + L-aspartate = N-carbamoyl-L-aspartate + phosphate + H(+). It participates in pyrimidine metabolism; UMP biosynthesis via de novo pathway; (S)-dihydroorotate from bicarbonate: step 2/3. Its function is as follows. Catalyzes the condensation of carbamoyl phosphate and aspartate to form carbamoyl aspartate and inorganic phosphate, the committed step in the de novo pyrimidine nucleotide biosynthesis pathway. This Deinococcus radiodurans (strain ATCC 13939 / DSM 20539 / JCM 16871 / CCUG 27074 / LMG 4051 / NBRC 15346 / NCIMB 9279 / VKM B-1422 / R1) protein is Aspartate carbamoyltransferase catalytic subunit.